A 647-amino-acid chain; its full sequence is Threonine--tRNA ligase (647 aa).

The 61-residue stretch at 1 to 61 folds into the TGS domain; it reads MIKITFPDGA…TEDGAIEIVT (61 aa). A catalytic region spans residues 242–540; it reads DHRKLGKELD…LIENYKGAFP (299 aa). Zn(2+) contacts are provided by Cys336, His387, and His517.

It belongs to the class-II aminoacyl-tRNA synthetase family. Homodimer. Zn(2+) is required as a cofactor.

It is found in the cytoplasm. The enzyme catalyses tRNA(Thr) + L-threonine + ATP = L-threonyl-tRNA(Thr) + AMP + diphosphate + H(+). In terms of biological role, catalyzes the attachment of threonine to tRNA(Thr) in a two-step reaction: L-threonine is first activated by ATP to form Thr-AMP and then transferred to the acceptor end of tRNA(Thr). Also edits incorrectly charged L-seryl-tRNA(Thr). This Streptococcus sanguinis (strain SK36) protein is Threonine--tRNA ligase.